The sequence spans 223 residues: MIF4G domain-containing protein (223 aa).

Positions D9–G206 constitute an MIF4G domain.

It belongs to the MIF4GD family. Interacts with eif4g1, eif4g2 and slbp; probably tethered by SLBP to the 3'-end of mRNAs ending with the histone stem-loop, it also interacts with eif4g1 which is bound to their 5'-end.

The protein resides in the cytoplasm. It localises to the nucleus. Functionally, functions in replication-dependent translation of histone mRNAs which differ from other eukaryotic mRNAs in that they do not end with a poly-A tail but a stem-loop. May participate in circularizing those mRNAs specifically enhancing their translation. The polypeptide is MIF4G domain-containing protein (mif4gd) (Xenopus tropicalis (Western clawed frog)).